The following is a 203-amino-acid chain: Urease accessory protein UreG (203 aa).

A GTP-binding site is contributed by 10–17; the sequence is GPVGAGKT.

Belongs to the SIMIBI class G3E GTPase family. UreG subfamily. As to quaternary structure, homodimer. UreD, UreF and UreG form a complex that acts as a GTP-hydrolysis-dependent molecular chaperone, activating the urease apoprotein by helping to assemble the nickel containing metallocenter of UreC. The UreE protein probably delivers the nickel.

The protein resides in the cytoplasm. In terms of biological role, facilitates the functional incorporation of the urease nickel metallocenter. This process requires GTP hydrolysis, probably effectuated by UreG. The protein is Urease accessory protein UreG of Lachnoclostridium phytofermentans (strain ATCC 700394 / DSM 18823 / ISDg) (Clostridium phytofermentans).